The chain runs to 150 residues: uncharacterized protein (150 aa).

Residues 5–66 (LDKVDRRLLE…KPNYKKLNLG (62 aa)) form the HTH asnC-type domain. The segment at residues 24–43 (IATLSKKLGIPRTTVHYRIK) is a DNA-binding region (H-T-H motif).

This is an uncharacterized protein from Pyrococcus abyssi (strain GE5 / Orsay).